A 35-amino-acid chain; its full sequence is Ranatuerin-2SPb (35 aa).

The cysteines at positions 28 and 33 are disulfide-linked.

As to expression, expressed by the skin glands.

It is found in the secreted. Antibacterial activity against Gram-positive bacterium S.aureus. Shows no detectable hemolytic activity towards human erythrocytes. This is Ranatuerin-2SPb from Lithobates septentrionalis (Mink frog).